Consider the following 219-residue polypeptide: MKKDLTLYETRVVGVLLEKEITTPDQYPLSLNALVNACNQKSNRHPVLELDEATVRQTLEALQRKDLVKGSSYGSRVEKYHHRFCNTEFGELKLDAQQVAVVCELLLRGPQTPGELRSRASRMAEFSDVQATESTLKRLLEHKLGPLVVMLPREPGKRESRYMHMFSSDIEPVETAAPSDSGSISAYKAKITDLEVRLEALQEENDALKKKLRQLGQVV.

This sequence belongs to the UPF0502 family.

The protein is UPF0502 protein HCH_06091 of Hahella chejuensis (strain KCTC 2396).